Consider the following 274-residue polypeptide: Large ribosomal subunit protein uL2 (274 aa).

A disordered region spans residues 223–258; sequence VAMNPVDHPHGGGEGRTSGGRHPVTPWGIPTKGYKT.

It belongs to the universal ribosomal protein uL2 family. Part of the 50S ribosomal subunit. Forms a bridge to the 30S subunit in the 70S ribosome.

Functionally, one of the primary rRNA binding proteins. Required for association of the 30S and 50S subunits to form the 70S ribosome, for tRNA binding and peptide bond formation. It has been suggested to have peptidyltransferase activity; this is somewhat controversial. Makes several contacts with the 16S rRNA in the 70S ribosome. This is Large ribosomal subunit protein uL2 from Pelobacter propionicus (strain DSM 2379 / NBRC 103807 / OttBd1).